The chain runs to 210 residues: Uracil phosphoribosyltransferase (210 aa).

Residues R78, R103, and 130–138 contribute to the 5-phospho-alpha-D-ribose 1-diphosphate site; that span reads DPMLATGGT. Uracil-binding positions include I193 and 198-200; that span reads GDA. D199 is a 5-phospho-alpha-D-ribose 1-diphosphate binding site.

This sequence belongs to the UPRTase family. It depends on Mg(2+) as a cofactor.

It catalyses the reaction UMP + diphosphate = 5-phospho-alpha-D-ribose 1-diphosphate + uracil. It functions in the pathway pyrimidine metabolism; UMP biosynthesis via salvage pathway; UMP from uracil: step 1/1. Allosterically activated by GTP. In terms of biological role, catalyzes the conversion of uracil and 5-phospho-alpha-D-ribose 1-diphosphate (PRPP) to UMP and diphosphate. The polypeptide is Uracil phosphoribosyltransferase (Xanthomonas euvesicatoria pv. vesicatoria (strain 85-10) (Xanthomonas campestris pv. vesicatoria)).